Reading from the N-terminus, the 461-residue chain is tRNA modification GTPase MnmE (461 aa).

Residues lysine 32, glutamate 89, and lysine 128 each contribute to the (6S)-5-formyl-5,6,7,8-tetrahydrofolate site. The TrmE-type G domain maps to 224–387; it reads GHALSIVGKP…LSQKISEFFP (164 aa). Residue asparagine 234 participates in K(+) binding. GTP is bound by residues 234–239, 253–259, and 278–281; these read NAGKSS, SDIKGTT, and DTAG. Position 238 (serine 238) interacts with Mg(2+). K(+) contacts are provided by serine 253, isoleucine 255, and threonine 258. Position 259 (threonine 259) interacts with Mg(2+). (6S)-5-formyl-5,6,7,8-tetrahydrofolate is bound at residue lysine 461.

It belongs to the TRAFAC class TrmE-Era-EngA-EngB-Septin-like GTPase superfamily. TrmE GTPase family. As to quaternary structure, homodimer. Heterotetramer of two MnmE and two MnmG subunits. Requires K(+) as cofactor.

It is found in the cytoplasm. Exhibits a very high intrinsic GTPase hydrolysis rate. Involved in the addition of a carboxymethylaminomethyl (cmnm) group at the wobble position (U34) of certain tRNAs, forming tRNA-cmnm(5)s(2)U34. The polypeptide is tRNA modification GTPase MnmE (Helicobacter pylori (strain J99 / ATCC 700824) (Campylobacter pylori J99)).